Here is an 84-residue protein sequence, read N- to C-terminus: Putative defensin-like protein 63 (84 aa).

A signal peptide spans 1–21 (MDIRKTYVIIFFVGILTISFS). Cystine bridges form between Cys40–Cys81, Cys44–Cys67, Cys53–Cys79, and Cys57–Cys80.

The protein belongs to the DEFL family.

It is found in the secreted. In Arabidopsis thaliana (Mouse-ear cress), this protein is Putative defensin-like protein 63.